An 83-amino-acid polypeptide reads, in one-letter code: MNGKLLLVSLMVTMLVMQPAEAGVWDWLKKTAKNVWNSDIVKQLKGKAINAAKNYVAEKIGATPSVAGQIPFDEFMDILHYRP.

The N-terminal stretch at 1 to 22 (MNGKLLLVSLMVTMLVMQPAEA) is a signal peptide. A propeptide spanning residues 66 to 83 (VAGQIPFDEFMDILHYRP) is cleaved from the precursor.

It belongs to the non-disulfide-bridged peptide (NDBP) superfamily. Long chain multifunctional peptide (group 2) family. As to expression, expressed by the venom gland.

Its subcellular location is the secreted. It is found in the target cell membrane. Functionally, amphipathic peptide with potent activities against both Gram-positive and Gram-negative bacteria. Is the most active against the two Gram-positive Bacillus megaterium and Micrococcus luteus (MIC=4.0 uM for both). It has relatively low hemolytic activity against human erythrocytes. The chain is Heterin-1 from Heterometrus spinifer (Asia giant forest scorpion).